We begin with the raw amino-acid sequence, 610 residues long: Protein arginine N-methyltransferase 5 (610 aa).

The 304-residue stretch at 284 to 587 folds into the SAM-dependent MTase PRMT-type domain; sequence LEIPLQPLCD…VDATKVWYEW (304 aa). An S-adenosyl-L-methionine-binding site is contributed by tyrosine 300. Phenylalanine 303 contributes to the a protein binding site. S-adenosyl-L-methionine is bound by residues 309–310, glutamate 368, and 396–397; these read KY and DM. Glutamate 412 and glutamate 421 together coordinate a protein. Catalysis depends on proton donor/acceptor residues glutamate 412 and glutamate 421. Residues 470-610 are interaction with vls; sequence AFDYGYVSLL…TRGTGYNMRL (141 aa).

Belongs to the class I-like SAM-binding methyltransferase superfamily. Protein arginine N-methyltransferase family. As to quaternary structure, interacts with vls. In terms of tissue distribution, expressed only in ovaries.

It is found in the cytoplasm. Arginine methyltransferase that can both catalyze the formation of omega-N monomethylarginine (MMA) and symmetrical dimethylarginine (sDMA). Specifically mediates the symmetrical dimethylation of arginine residues in the small nuclear ribonucleoproteins SmD1 and SmD3. Required for arginine symmetrical dimethylation of piwi family proteins, piwi, aub and AGO3, during germline development. Required during oogenesis for pole cell formation in the pathway controlled by oskar (osk) and for abdominal segments during early embryogenesis. Involved in nanos (nos) and germ cell mRNAs localization. This chain is Protein arginine N-methyltransferase 5, found in Drosophila melanogaster (Fruit fly).